The sequence spans 199 residues: N-(5'-phosphoribosyl)anthranilate isomerase (199 aa).

The protein belongs to the TrpF family.

It catalyses the reaction N-(5-phospho-beta-D-ribosyl)anthranilate = 1-(2-carboxyphenylamino)-1-deoxy-D-ribulose 5-phosphate. The protein operates within amino-acid biosynthesis; L-tryptophan biosynthesis; L-tryptophan from chorismate: step 3/5. This chain is N-(5'-phosphoribosyl)anthranilate isomerase, found in Streptococcus pneumoniae serotype 4 (strain ATCC BAA-334 / TIGR4).